The primary structure comprises 86 residues: Cardiotoxin homolog TA-ctx-like (86 aa).

A signal peptide spans 1-21 (MKTLLLTLVVLTIACLDLGYT). Intrachain disulfides connect cysteine 24-cysteine 45, cysteine 38-cysteine 62, cysteine 66-cysteine 78, and cysteine 79-cysteine 84.

This sequence belongs to the three-finger toxin family. Short-chain subfamily. Orphan group IX sub-subfamily. Expressed by the venom gland.

The protein resides in the secreted. The protein is Cardiotoxin homolog TA-ctx-like of Bungarus multicinctus (Many-banded krait).